The primary structure comprises 348 residues: Fe(3+) ions import ATP-binding protein FbpC (348 aa).

Residues 6 to 236 (LSLEGATVRF…PADAFVARFL (231 aa)) enclose the ABC transporter domain. 38 to 45 (GPSGSGKS) contacts ATP.

It belongs to the ABC transporter superfamily. Fe(3+) ion importer (TC 3.A.1.10) family. The complex is composed of two ATP-binding proteins (FbpC), two transmembrane proteins (FbpB) and a solute-binding protein (FbpA).

The protein localises to the cell membrane. It catalyses the reaction Fe(3+)(out) + ATP + H2O = Fe(3+)(in) + ADP + phosphate + H(+). Part of the ABC transporter complex FbpABC involved in Fe(3+) ions import. Responsible for energy coupling to the transport system. This is Fe(3+) ions import ATP-binding protein FbpC from Streptomyces coelicolor (strain ATCC BAA-471 / A3(2) / M145).